Reading from the N-terminus, the 678-residue chain is NADPH--cytochrome P450 reductase (678 aa).

G2 is modified (N-acetylglycine). Residues 2–22 (GDSNVDTGTTTSEMVAEEVSL) are Lumenal-facing. Residues 23 to 43 (FSATDMVLFSLIVGLLTYWFI) traverse the membrane as a helical segment. Over 44–678 (FRKKKDEVPE…KGRYSLDVWS (635 aa)) the chain is Cytoplasmic. Position 63 is a phosphoserine (S63). The 145-residue stretch at 80 to 224 (IIVFYGSQTG…DFITWREQFW (145 aa)) folds into the Flavodoxin-like domain. Residues 86–91 (SQTGTA), 138–141 (ATYG), 173–182 (LGNKTYEHFN), and D208 each bind FMN. One can recognise an FAD-binding FR-type domain in the interval 279-521 (KNPFLAVVTT…FVRKSQFRLP (243 aa)). Residue R298 participates in NADP(+) binding. Residues R424, 454-457 (RYYS), 472-474 (CAV), Y478, and 488-491 (GVAT) contribute to the FAD site. NADP(+)-binding positions include T535, 596-597 (SR), 602-606 (KVYVQ), and D639. Residue W677 coordinates FAD.

This sequence belongs to the NADPH--cytochrome P450 reductase family. In the N-terminal section; belongs to the flavodoxin family. It in the C-terminal section; belongs to the flavoprotein pyridine nucleotide cytochrome reductase family. FAD serves as cofactor. It depends on FMN as a cofactor.

It is found in the endoplasmic reticulum membrane. It carries out the reaction 2 oxidized [cytochrome P450] + NADPH = 2 reduced [cytochrome P450] + NADP(+) + H(+). This enzyme is required for electron transfer from NADP to cytochrome P450 in microsomes. It can also provide electron transfer to heme oxygenase and cytochrome B5. In Sus scrofa (Pig), this protein is NADPH--cytochrome P450 reductase.